The sequence spans 828 residues: Mediator of RNA polymerase II transcription subunit 16 (828 aa).

WD repeat units lie at residues 68–107, 199–241, 264–308, 622–663, and 777–816; these read GHQEVITSLEWDQSGSRLLSADADGRIKCWGMTDHLANSW, RCRV…VSEK, DKFP…LPLN, NQGS…CLPV, and FPTEPCKSCTRCGCVTMLKSPNKATAVKQWEQRWIKTCLC.

This sequence belongs to the Mediator complex subunit 16 family. In terms of assembly, component of the Mediator complex.

The protein localises to the nucleus. In terms of biological role, component of the Mediator complex, a coactivator involved in the regulated transcription of nearly all RNA polymerase II-dependent genes. Mediator functions as a bridge to convey information from gene-specific regulatory proteins to the basal RNA polymerase II transcription machinery. Mediator is recruited to promoters by direct interactions with regulatory proteins and serves as a scaffold for the assembly of a functional preinitiation complex with RNA polymerase II and the general transcription factors. This is Mediator of RNA polymerase II transcription subunit 16 (med16) from Xenopus tropicalis (Western clawed frog).